A 416-amino-acid chain; its full sequence is Glutamate dehydrogenase (416 aa).

Residue K105 is part of the active site.

It belongs to the Glu/Leu/Phe/Val dehydrogenases family. Homohexamer.

It carries out the reaction L-glutamate + NAD(+) + H2O = 2-oxoglutarate + NH4(+) + NADH + H(+). The enzyme catalyses L-glutamate + NADP(+) + H2O = 2-oxoglutarate + NH4(+) + NADPH + H(+). This is Glutamate dehydrogenase (gdhA) from Thermotoga maritima (strain ATCC 43589 / DSM 3109 / JCM 10099 / NBRC 100826 / MSB8).